The following is a 208-amino-acid chain: Octanoyltransferase (208 aa).

The BPL/LPL catalytic domain maps to 31–208 (GSEREMVWLL…LKKEFYKVFA (178 aa)). Substrate contacts are provided by residues 70-77 (RGGKYSYH), 142-144 (AFG), and 155-157 (GVA). Residue Cys-173 is the Acyl-thioester intermediate of the active site.

This sequence belongs to the LipB family.

The protein localises to the cytoplasm. It catalyses the reaction octanoyl-[ACP] + L-lysyl-[protein] = N(6)-octanoyl-L-lysyl-[protein] + holo-[ACP] + H(+). It functions in the pathway protein modification; protein lipoylation via endogenous pathway; protein N(6)-(lipoyl)lysine from octanoyl-[acyl-carrier-protein]: step 1/2. Its function is as follows. Catalyzes the transfer of endogenously produced octanoic acid from octanoyl-acyl-carrier-protein onto the lipoyl domains of lipoate-dependent enzymes. Lipoyl-ACP can also act as a substrate although octanoyl-ACP is likely to be the physiological substrate. The protein is Octanoyltransferase of Anaplasma phagocytophilum (strain HZ).